The primary structure comprises 173 residues: Glycine cleavage system H protein, mitochondrial (173 aa).

The transit peptide at methionine 1–leucine 48 directs the protein to the mitochondrion. The region spanning isoleucine 66 to threonine 148 is the Lipoyl-binding domain. The residue at position 107 (lysine 107) is an N6-lipoyllysine.

Belongs to the GcvH family. Interacts with GLDC. The glycine cleavage system is composed of four proteins: P (GLDC), T (GCST), L (DLD) and H (GCSH). (R)-lipoate serves as cofactor.

The protein localises to the mitochondrion. In terms of biological role, the glycine cleavage system catalyzes the degradation of glycine. The H protein (GCSH) shuttles the methylamine group of glycine from the P protein (GLDC) to the T protein (GCST). Has a pivotal role in the lipoylation of enzymes involved in cellular energetics such as the mitochondrial dihydrolipoyllysine-residue acetyltransferase component of pyruvate dehydrogenase complex (DLAT), and the mitochondrial dihydrolipoyllysine-residue succinyltransferase component of 2-oxoglutarate dehydrogenase complex (DLST). In Homo sapiens (Human), this protein is Glycine cleavage system H protein, mitochondrial.